The chain runs to 209 residues: Large ribosomal subunit protein uL4 (209 aa).

Positions 46 to 76 (RGTASTKTRGEVSGGGRKPWRQKGTGRARHG) are disordered. The segment covering 63-76 (KPWRQKGTGRARHG) has biased composition (basic residues).

Belongs to the universal ribosomal protein uL4 family. In terms of assembly, part of the 50S ribosomal subunit.

One of the primary rRNA binding proteins, this protein initially binds near the 5'-end of the 23S rRNA. It is important during the early stages of 50S assembly. It makes multiple contacts with different domains of the 23S rRNA in the assembled 50S subunit and ribosome. Functionally, forms part of the polypeptide exit tunnel. The polypeptide is Large ribosomal subunit protein uL4 (Halothermothrix orenii (strain H 168 / OCM 544 / DSM 9562)).